Reading from the N-terminus, the 126-residue chain is Large ribosomal subunit protein bL17 (126 aa).

This sequence belongs to the bacterial ribosomal protein bL17 family. In terms of assembly, part of the 50S ribosomal subunit. Contacts protein L32.

In Vibrio parahaemolyticus serotype O3:K6 (strain RIMD 2210633), this protein is Large ribosomal subunit protein bL17.